We begin with the raw amino-acid sequence, 167 residues long: Leptin (167 aa).

The signal sequence occupies residues 1–21; sequence MLCGPLCRFLWLWPYLSYVEA. C117 and C167 are disulfide-bonded.

It belongs to the leptin family.

The protein localises to the secreted. Key player in the regulation of energy balance and body weight control. Once released into the circulation, has central and peripheral effects by binding LEPR, found in many tissues, which results in the activation of several major signaling pathways. In the hypothalamus, acts as an appetite-regulating factor that induces a decrease in food intake and an increase in energy consumption by inducing anorexinogenic factors and suppressing orexigenic neuropeptides, also regulates bone mass and secretion of hypothalamo-pituitary-adrenal hormones. In the periphery, increases basal metabolism, influences reproductive function, regulates pancreatic beta-cell function and insulin secretion, is pro-angiogenic for endothelial cell and affects innate and adaptive immunity. In the arcuate nucleus of the hypothalamus, activates by depolarization POMC neurons inducing FOS and SOCS3 expression to release anorexigenic peptides and inhibits by hyperpolarization NPY neurons inducing SOCS3 with a consequent reduction on release of orexigenic peptides. In addition to its known satiety inducing effect, has a modulatory role in nutrient absorption. In the intestine, reduces glucose absorption by enterocytes by activating PKC and leading to a sequential activation of p38, PI3K and ERK signaling pathways which exerts an inhibitory effect on glucose absorption. Acts as a growth factor on certain tissues, through the activation of different signaling pathways increases expression of genes involved in cell cycle regulation such as CCND1, via JAK2-STAT3 pathway, or VEGFA, via MAPK1/3 and PI3K-AKT1 pathways. May also play an apoptotic role via JAK2-STAT3 pathway and up-regulation of BIRC5 expression. Pro-angiogenic, has mitogenic activity on vascular endothelial cells and plays a role in matrix remodeling by regulating the expression of matrix metalloproteinases (MMPs) and tissue inhibitors of metalloproteinases (TIMPs). In innate immunity, modulates the activity and function of neutrophils by increasing chemotaxis and the secretion of oxygen radicals. Increases phagocytosis by macrophages and enhances secretion of pro-inflammatory mediators. Increases cytotoxic ability of NK cells. Plays a pro-inflammatory role, in synergy with IL1B, by inducing NOS2 which promotes the production of IL6, IL8 and Prostaglandin E2, through a signaling pathway that involves JAK2, PI3K, MAP2K1/MEK1 and MAPK14/p38. In adaptive immunity, promotes the switch of memory T-cells towards T helper-1 cell immune responses. Increases CD4(+)CD25(-) T-cell proliferation and reduces autophagy during TCR (T-cell receptor) stimulation, through MTOR signaling pathway activation and BCL2 up-regulation. This is Leptin (LEP) from Felis catus (Cat).